Reading from the N-terminus, the 522-residue chain is Protein nucleotidyltransferase YdiU (522 aa).

ATP is bound by residues glycine 109, glycine 111, arginine 112, lysine 132, aspartate 144, glycine 145, arginine 195, and arginine 202. Residue aspartate 271 is the Proton acceptor of the active site. Mg(2+) contacts are provided by asparagine 272 and aspartate 281. Aspartate 281 serves as a coordination point for ATP.

The protein belongs to the SELO family. The cofactor is Mg(2+). Mn(2+) is required as a cofactor.

It catalyses the reaction L-seryl-[protein] + ATP = 3-O-(5'-adenylyl)-L-seryl-[protein] + diphosphate. The catalysed reaction is L-threonyl-[protein] + ATP = 3-O-(5'-adenylyl)-L-threonyl-[protein] + diphosphate. The enzyme catalyses L-tyrosyl-[protein] + ATP = O-(5'-adenylyl)-L-tyrosyl-[protein] + diphosphate. It carries out the reaction L-histidyl-[protein] + UTP = N(tele)-(5'-uridylyl)-L-histidyl-[protein] + diphosphate. It catalyses the reaction L-seryl-[protein] + UTP = O-(5'-uridylyl)-L-seryl-[protein] + diphosphate. The catalysed reaction is L-tyrosyl-[protein] + UTP = O-(5'-uridylyl)-L-tyrosyl-[protein] + diphosphate. Its function is as follows. Nucleotidyltransferase involved in the post-translational modification of proteins. It can catalyze the addition of adenosine monophosphate (AMP) or uridine monophosphate (UMP) to a protein, resulting in modifications known as AMPylation and UMPylation. The sequence is that of Protein nucleotidyltransferase YdiU from Burkholderia lata (strain ATCC 17760 / DSM 23089 / LMG 22485 / NCIMB 9086 / R18194 / 383).